Here is a 64-residue protein sequence, read N- to C-terminus: Large ribosomal subunit protein bL35 (64 aa).

It belongs to the bacterial ribosomal protein bL35 family.

The polypeptide is Large ribosomal subunit protein bL35 (Acidothermus cellulolyticus (strain ATCC 43068 / DSM 8971 / 11B)).